We begin with the raw amino-acid sequence, 812 residues long: Valine--tRNA ligase (812 aa).

Residues 46–56 (PTVSGQLHIGH) carry the 'HIGH' region motif. The 'KMSKS' region signature appears at 536-540 (KMSKS). An ATP-binding site is contributed by Lys-539.

The protein belongs to the class-I aminoacyl-tRNA synthetase family. ValS type 2 subfamily. As to quaternary structure, monomer.

The protein localises to the cytoplasm. The enzyme catalyses tRNA(Val) + L-valine + ATP = L-valyl-tRNA(Val) + AMP + diphosphate. In terms of biological role, catalyzes the attachment of valine to tRNA(Val). As ValRS can inadvertently accommodate and process structurally similar amino acids such as threonine, to avoid such errors, it has a 'posttransfer' editing activity that hydrolyzes mischarged Thr-tRNA(Val) in a tRNA-dependent manner. The protein is Valine--tRNA ligase of Rickettsia bellii (strain RML369-C).